Consider the following 116-residue polypeptide: Phosphoribosyl-AMP cyclohydrolase (116 aa).

Asp-85 contributes to the Mg(2+) binding site. Residue Cys-86 coordinates Zn(2+). Asp-87 and Asp-89 together coordinate Mg(2+). Zn(2+)-binding residues include Cys-102 and Cys-109.

It belongs to the PRA-CH family. Homodimer. Mg(2+) is required as a cofactor. It depends on Zn(2+) as a cofactor.

The protein localises to the cytoplasm. It catalyses the reaction 1-(5-phospho-beta-D-ribosyl)-5'-AMP + H2O = 1-(5-phospho-beta-D-ribosyl)-5-[(5-phospho-beta-D-ribosylamino)methylideneamino]imidazole-4-carboxamide. The protein operates within amino-acid biosynthesis; L-histidine biosynthesis; L-histidine from 5-phospho-alpha-D-ribose 1-diphosphate: step 3/9. Its function is as follows. Catalyzes the hydrolysis of the adenine ring of phosphoribosyl-AMP. This is Phosphoribosyl-AMP cyclohydrolase from Corynebacterium diphtheriae (strain ATCC 700971 / NCTC 13129 / Biotype gravis).